Reading from the N-terminus, the 450-residue chain is ADP-specific phosphofructokinase (450 aa).

Residues 1-449 (MIPEHLSIYT…FLTYLEFLKR (449 aa)) form the ADPK domain. Mg(2+)-binding residues include Glu-260, Glu-290, and Asp-433. Asp-433 acts as the Proton acceptor in catalysis.

This sequence belongs to the carbohydrate kinase PfkC family. It depends on Mg(2+) as a cofactor.

The protein localises to the cytoplasm. The enzyme catalyses beta-D-fructose 6-phosphate + ADP = beta-D-fructose 1,6-bisphosphate + AMP + H(+). It participates in carbohydrate degradation; glycolysis. Functionally, catalyzes the phosphorylation of fructose 6-phosphate to fructose 1,6-bisphosphate using ADP as the phosphate donor. The chain is ADP-specific phosphofructokinase from Pyrococcus horikoshii (strain ATCC 700860 / DSM 12428 / JCM 9974 / NBRC 100139 / OT-3).